Reading from the N-terminus, the 66-residue chain is DNA-directed RNA polymerase subunit omega (66 aa).

The protein belongs to the RNA polymerase subunit omega family. In terms of assembly, the RNAP catalytic core consists of 2 alpha, 1 beta, 1 beta' and 1 omega subunit. When a sigma factor is associated with the core the holoenzyme is formed, which can initiate transcription.

The catalysed reaction is RNA(n) + a ribonucleoside 5'-triphosphate = RNA(n+1) + diphosphate. Its function is as follows. Promotes RNA polymerase assembly. Latches the N- and C-terminal regions of the beta' subunit thereby facilitating its interaction with the beta and alpha subunits. This Bacillus licheniformis (strain ATCC 14580 / DSM 13 / JCM 2505 / CCUG 7422 / NBRC 12200 / NCIMB 9375 / NCTC 10341 / NRRL NRS-1264 / Gibson 46) protein is DNA-directed RNA polymerase subunit omega.